Reading from the N-terminus, the 87-residue chain is UPF0250 protein SG0794 (87 aa).

It belongs to the UPF0250 family.

The protein is UPF0250 protein SG0794 of Sodalis glossinidius (strain morsitans).